We begin with the raw amino-acid sequence, 329 residues long: NAD(P)H-dependent D-xylose reductase (329 aa).

Residue tyrosine 52 is the Proton donor of the active site. Histidine 114 contacts substrate. NAD(+)-binding positions include 173 to 174, 222 to 231, and 278 to 288; these read SN, SSFGPVSFLE, and KSSKKERLLDN.

The protein belongs to the aldo/keto reductase family.

It catalyses the reaction xylitol + NAD(+) = D-xylose + NADH + H(+). The catalysed reaction is xylitol + NADP(+) = D-xylose + NADPH + H(+). Its pathway is carbohydrate metabolism; D-xylose degradation. Its function is as follows. Reduces D-xylose into xylitol. The chain is NAD(P)H-dependent D-xylose reductase (XYL1) from Kluyveromyces lactis (strain ATCC 8585 / CBS 2359 / DSM 70799 / NBRC 1267 / NRRL Y-1140 / WM37) (Yeast).